We begin with the raw amino-acid sequence, 471 residues long: Dynein regulatory complex subunit 4 (471 aa).

Positions 1–24 (MAPKKKGTKKESKKDAVATGDIEG) are disordered. Coiled-coil stretches lie at residues 23-239 (EGAS…YNDI) and 282-425 (LSRA…DVAK).

It belongs to the DRC4 family. Component of the nexin-dynein regulatory complex (N-DRC). Interacts with DRC1, DRC2 and DRC5.

The protein localises to the cytoplasm. The protein resides in the cytoskeleton. Its subcellular location is the flagellum axoneme. It localises to the flagellum basal body. Functionally, component of the nexin-dynein regulatory complex (N-DRC), a key regulator of ciliary/flagellar motility which maintains the alignment and integrity of the distal axoneme and regulates microtubule sliding in motile axonemes. Plays an important role in the assembly of the N-DRC linker. This Chlamydomonas reinhardtii (Chlamydomonas smithii) protein is Dynein regulatory complex subunit 4.